The sequence spans 238 residues: Sugar fermentation stimulation protein homolog (238 aa).

It belongs to the SfsA family.

In Shewanella denitrificans (strain OS217 / ATCC BAA-1090 / DSM 15013), this protein is Sugar fermentation stimulation protein homolog.